A 452-amino-acid polypeptide reads, in one-letter code: MATSSLKLTSACFVLLFIFVGCVLTATNLRNNEISRSRKLKTEDSKSFNSSPMTTRLDGVVELNEHAVTDPDKVAHEVSNLIHMSEQNITARRKLGFFSCGNGNLIDDCWRCDRNWNKNRKHLADCGMGFGSKAFGGRNGSYYVVTDHSDDDVVNPKPGTLRHAVIQVEPLWIIFKRDMVIKLKQELIMNSFKTIDARGANVHIANGACITIQNITNVIVHGLHIHDCKRTGNVTVRSSPSQAGFRGTADGDAINIFGSSHIWIDHNSLSNCTDGLVDVVNGSTAITISNNHFTHHDEVMLLGHNDSYTRDKMMQVTVAYNHFGEGLIQRMPRCRHGYFHVVNNDYTHWKMYAIGGSANPTINSQGNRFAAPKNHSAKEVTKRLDTKGNEWMEWNWRSEKDLLVNGAFFTPSGEGASGDSQTLSLPAKPASMVDAITASAGALSCRRGKPCY.

The signal sequence occupies residues 1–25 (MATSSLKLTSACFVLLFIFVGCVLT). N-linked (GlcNAc...) asparagine glycosylation is found at Asn88, Asn139, Asn214, and Asn233. Ca(2+) is bound at residue Asp250. An N-linked (GlcNAc...) asparagine glycan is attached at Asn271. The Ca(2+) site is built by Asp274 and Asp278. 2 N-linked (GlcNAc...) asparagine glycosylation sites follow: Asn281 and Asn305. Arg330 is an active-site residue. A glycan (N-linked (GlcNAc...) asparagine) is linked at Asn374.

It belongs to the polysaccharide lyase 1 family. Ca(2+) is required as a cofactor.

It carries out the reaction Eliminative cleavage of (1-&gt;4)-alpha-D-galacturonan to give oligosaccharides with 4-deoxy-alpha-D-galact-4-enuronosyl groups at their non-reducing ends.. It functions in the pathway glycan metabolism; pectin degradation; 2-dehydro-3-deoxy-D-gluconate from pectin: step 2/5. This Arabidopsis thaliana (Mouse-ear cress) protein is Probable pectate lyase 9.